A 229-amino-acid polypeptide reads, in one-letter code: ATP synthase subunit a (229 aa).

6 helical membrane-spanning segments follow: residues A25–A45, F82–V102, G104–V124, F142–L162, L181–M201, and G202–Q222.

Belongs to the ATPase A chain family. F-type ATPases have 2 components, CF(1) - the catalytic core - and CF(0) - the membrane proton channel. CF(1) has five subunits: alpha(3), beta(3), gamma(1), delta(1), epsilon(1). CF(0) has three main subunits: a(1), b(2) and c(9-12). The alpha and beta chains form an alternating ring which encloses part of the gamma chain. CF(1) is attached to CF(0) by a central stalk formed by the gamma and epsilon chains, while a peripheral stalk is formed by the delta and b chains.

Its subcellular location is the cell inner membrane. In terms of biological role, key component of the proton channel; it plays a direct role in the translocation of protons across the membrane. The polypeptide is ATP synthase subunit a (Citrifermentans bemidjiense (strain ATCC BAA-1014 / DSM 16622 / JCM 12645 / Bem) (Geobacter bemidjiensis)).